A 535-amino-acid polypeptide reads, in one-letter code: Dual specificity calcium/calmodulin-dependent 3',5'-cyclic nucleotide phosphodiesterase 1B (535 aa).

Positions 1–21 (MELSPRSPPEMLESDCPSPLE) are disordered. S7 and S14 each carry phosphoserine. 2 calmodulin-binding regions span residues 26 to 46 (PSKKMWIKLRSLLRYMVKQLE) and 117 to 140 (EKPKFRSIVHAVQAGIFVERMFRR). A PDEase domain is found at 145-502 (VGPTYSTAVH…QKWKERAASG (358 aa)). Residue H222 is the Proton donor of the active site. Residues H226, H262, D263, and D369 each contribute to the Zn(2+) site. D263 provides a ligand contact to Mg(2+). Disordered stretches follow at residues 445-474 (PLADDDSKSKSQPSFQWRQPSLDVDVGDPN) and 495-535 (WKER…GNLD). The segment covering 454–463 (KSQPSFQWRQ) has biased composition (polar residues). Phosphoserine is present on residues S465 and S513.

The protein belongs to the cyclic nucleotide phosphodiesterase family. PDE1 subfamily. As to quaternary structure, homodimer. Zn(2+) serves as cofactor. Mg(2+) is required as a cofactor.

Its subcellular location is the cytoplasm. The protein localises to the cytosol. It catalyses the reaction a nucleoside 3',5'-cyclic phosphate + H2O = a nucleoside 5'-phosphate + H(+). The catalysed reaction is 3',5'-cyclic GMP + H2O = GMP + H(+). It carries out the reaction 3',5'-cyclic AMP + H2O = AMP + H(+). Type I PDE are activated by the binding of calmodulin in the presence of Ca(2+). In terms of biological role, cyclic nucleotide phosphodiesterase with a dual specificity for the second messengers cAMP and cGMP, which are key regulators of many important physiological processes. Has a preference for cGMP as a substrate. This Cricetulus griseus (Chinese hamster) protein is Dual specificity calcium/calmodulin-dependent 3',5'-cyclic nucleotide phosphodiesterase 1B.